The following is a 909-amino-acid chain: Protein translocase subunit SecA (909 aa).

ATP is bound by residues Gln-87, 105–109 (GEGKT), and Asp-507. 2 disordered regions span residues 567–586 (RRIDNQLRGRSGRQGDPGSS) and 859–909 (YSEA…GKLD). A compositionally biased stretch (basic and acidic residues) spans 865-889 (EHQSVTEGHEAKQQPFVRKSDKIGR). Zn(2+) is bound by residues Cys-893, Cys-895, Cys-904, and His-905. Positions 899–909 (RKYKQCHGKLD) are enriched in basic residues.

Belongs to the SecA family. As to quaternary structure, monomer and homodimer. Part of the essential Sec protein translocation apparatus which comprises SecA, SecYEG and auxiliary proteins SecDF-YajC and YidC. Zn(2+) serves as cofactor.

It is found in the cell inner membrane. The protein resides in the cytoplasm. It catalyses the reaction ATP + H2O + cellular proteinSide 1 = ADP + phosphate + cellular proteinSide 2.. In terms of biological role, part of the Sec protein translocase complex. Interacts with the SecYEG preprotein conducting channel. Has a central role in coupling the hydrolysis of ATP to the transfer of proteins into and across the cell membrane, serving both as a receptor for the preprotein-SecB complex and as an ATP-driven molecular motor driving the stepwise translocation of polypeptide chains across the membrane. The polypeptide is Protein translocase subunit SecA (Nitrosomonas eutropha (strain DSM 101675 / C91 / Nm57)).